We begin with the raw amino-acid sequence, 130 residues long: Small ribosomal subunit protein uS11 (130 aa).

This sequence belongs to the universal ribosomal protein uS11 family. In terms of assembly, part of the 30S ribosomal subunit. Interacts with proteins S7 and S18. Binds to IF-3.

In terms of biological role, located on the platform of the 30S subunit, it bridges several disparate RNA helices of the 16S rRNA. Forms part of the Shine-Dalgarno cleft in the 70S ribosome. The polypeptide is Small ribosomal subunit protein uS11 (Xylella fastidiosa (strain M23)).